We begin with the raw amino-acid sequence, 326 residues long: DNA-directed RNA polymerase subunit alpha (326 aa).

Residues 1-231 (MQTALLKPKI…DQLSVFAALE (231 aa)) form an alpha N-terminal domain (alpha-NTD) region. Residues 247 to 326 (IDPILLRPVD…ENWPPAGLEK (80 aa)) form an alpha C-terminal domain (alpha-CTD) region.

This sequence belongs to the RNA polymerase alpha chain family. Homodimer. The RNAP catalytic core consists of 2 alpha, 1 beta, 1 beta' and 1 omega subunit. When a sigma factor is associated with the core the holoenzyme is formed, which can initiate transcription.

It carries out the reaction RNA(n) + a ribonucleoside 5'-triphosphate = RNA(n+1) + diphosphate. Functionally, DNA-dependent RNA polymerase catalyzes the transcription of DNA into RNA using the four ribonucleoside triphosphates as substrates. This chain is DNA-directed RNA polymerase subunit alpha, found in Cupriavidus necator (strain ATCC 17699 / DSM 428 / KCTC 22496 / NCIMB 10442 / H16 / Stanier 337) (Ralstonia eutropha).